The sequence spans 161 residues: 6,7-dimethyl-8-ribityllumazine synthase (161 aa).

5-amino-6-(D-ribitylamino)uracil-binding positions include Trp26, Ser58–Glu60, and Val81–Ile83. Gly86–Thr87 provides a ligand contact to (2S)-2-hydroxy-3-oxobutyl phosphate. His89 acts as the Proton donor in catalysis. Phe114 lines the 5-amino-6-(D-ribitylamino)uracil pocket. Arg128 is a (2S)-2-hydroxy-3-oxobutyl phosphate binding site.

Belongs to the DMRL synthase family.

It catalyses the reaction (2S)-2-hydroxy-3-oxobutyl phosphate + 5-amino-6-(D-ribitylamino)uracil = 6,7-dimethyl-8-(1-D-ribityl)lumazine + phosphate + 2 H2O + H(+). Its pathway is cofactor biosynthesis; riboflavin biosynthesis; riboflavin from 2-hydroxy-3-oxobutyl phosphate and 5-amino-6-(D-ribitylamino)uracil: step 1/2. In terms of biological role, catalyzes the formation of 6,7-dimethyl-8-ribityllumazine by condensation of 5-amino-6-(D-ribitylamino)uracil with 3,4-dihydroxy-2-butanone 4-phosphate. This is the penultimate step in the biosynthesis of riboflavin. The sequence is that of 6,7-dimethyl-8-ribityllumazine synthase from Streptomyces avermitilis (strain ATCC 31267 / DSM 46492 / JCM 5070 / NBRC 14893 / NCIMB 12804 / NRRL 8165 / MA-4680).